A 2635-amino-acid polypeptide reads, in one-letter code: Protein unc-79 homolog (2635 aa).

Phosphoserine is present on residues serine 754 and serine 758. Disordered regions lie at residues 907–929 (GPEGEEEENPASKHGENPGNCTE), 1538–1575 (IAQRPNDPGRSRQNSATRPDNSEIPENPAMEGFPDARR), 1607–1678 (LIDL…SVLS), 1693–1832 (SKDF…FKIQ), 1863–1909 (LGEQ…TQYR), and 1929–1950 (LEHQSSAPHNISNWDTEQIQPG). The span at 1666–1678 (SSPSVPSHPSVLS) shows a compositional bias: low complexity. A compositionally biased stretch (polar residues) spans 1699-1713 (KDSGNNQSAGNTDSA). Positions 1761–1775 (LDDHPDPGTEGEKPG) are enriched in basic and acidic residues. Polar residues-rich tracts occupy residues 1897-1909 (ETSSHSSISTQYR) and 1929-1947 (LEHQSSAPHNISNWDTEQI). A run of 2 helical transmembrane segments spans residues 2223–2243 (LLSFVIQNAVFTLAYLVELCG) and 2466–2486 (VLHMCSLFHAFIFAQLWTVYC).

Belongs to the unc-79 family. In terms of assembly, NALCN complex consists of NALCN and auxiliary subunits, UNC79, UNC80 and NACL1. These auxiliary subunits are essential for the NALCN channel function. UNC80 bridges NALCN to UNC79.

The protein resides in the cell membrane. Its function is as follows. Auxiliary subunit of the NALCN sodium channel complex, a voltage-gated ion channel responsible for the resting Na(+) permeability that controls neuronal excitability. Activated by neuropeptides substance P, neurotensin, and extracellular calcium that regulates neuronal excitability by controlling the sizes of NALCN-dependent sodium-leak current. The protein is Protein unc-79 homolog (UNC79) of Homo sapiens (Human).